Here is a 347-residue protein sequence, read N- to C-terminus: S-adenosylmethionine:tRNA ribosyltransferase-isomerase (347 aa).

This sequence belongs to the QueA family. In terms of assembly, monomer.

It localises to the cytoplasm. It carries out the reaction 7-aminomethyl-7-carbaguanosine(34) in tRNA + S-adenosyl-L-methionine = epoxyqueuosine(34) in tRNA + adenine + L-methionine + 2 H(+). It participates in tRNA modification; tRNA-queuosine biosynthesis. In terms of biological role, transfers and isomerizes the ribose moiety from AdoMet to the 7-aminomethyl group of 7-deazaguanine (preQ1-tRNA) to give epoxyqueuosine (oQ-tRNA). This Pseudomonas paraeruginosa (strain DSM 24068 / PA7) (Pseudomonas aeruginosa (strain PA7)) protein is S-adenosylmethionine:tRNA ribosyltransferase-isomerase.